The chain runs to 554 residues: Oxygen-dependent choline dehydrogenase (554 aa).

4-33 lines the FAD pocket; the sequence is DYIIIGAGSAGNVLATRLTEDPNTTVLLLE. The active-site Proton acceptor is His473.

Belongs to the GMC oxidoreductase family. It depends on FAD as a cofactor.

It catalyses the reaction choline + A = betaine aldehyde + AH2. It carries out the reaction betaine aldehyde + NAD(+) + H2O = glycine betaine + NADH + 2 H(+). Its pathway is amine and polyamine biosynthesis; betaine biosynthesis via choline pathway; betaine aldehyde from choline (cytochrome c reductase route): step 1/1. Functionally, involved in the biosynthesis of the osmoprotectant glycine betaine. Catalyzes the oxidation of choline to betaine aldehyde and betaine aldehyde to glycine betaine at the same rate. In Klebsiella pneumoniae subsp. pneumoniae (strain ATCC 700721 / MGH 78578), this protein is Oxygen-dependent choline dehydrogenase.